Reading from the N-terminus, the 235-residue chain is UPF0502 protein Bcep18194_B0081 (235 aa).

Belongs to the UPF0502 family.

This Burkholderia lata (strain ATCC 17760 / DSM 23089 / LMG 22485 / NCIMB 9086 / R18194 / 383) protein is UPF0502 protein Bcep18194_B0081.